Reading from the N-terminus, the 261-residue chain is Small ribosomal subunit protein uS2 (261 aa).

Ser2 carries the N-acetylserine modification. Positions 212-261 are disordered; the sequence is QNAAEEAKAEETEEAPAAEAETEWTGETDDVDWADSGATPAAEDAAASNW. The segment covering 222-244 has biased composition (acidic residues); that stretch reads ETEEAPAAEAETEWTGETDDVDW.

The protein belongs to the universal ribosomal protein uS2 family. As to quaternary structure, component of the small ribosomal subunit. Mature ribosomes consist of a small (40S) and a large (60S) subunit. The 40S subunit contains about 33 different proteins and 1 molecule of RNA (18S). The 60S subunit contains about 49 different proteins and 3 molecules of RNA (25S, 5.8S and 5S). Interacts with RPS21.

It is found in the cytoplasm. Its function is as follows. Required for the assembly and/or stability of the 40S ribosomal subunit. Required for the processing of the 20S rRNA-precursor to mature 18S rRNA in a late step of the maturation of 40S ribosomal subunits. This chain is Small ribosomal subunit protein uS2, found in Candida tropicalis (Yeast).